A 190-amino-acid chain; its full sequence is LOB domain-containing protein 1 (190 aa).

The span at 1–11 shows a compositional bias: polar residues; the sequence is MESKSDASVAT. Residues 1–27 form a disordered region; the sequence is MESKSDASVATTPIISSSSSPPPSLSP. The LOB domain maps to 32-133; that stretch reads SPCAACKILR…AQLAKAQVEM (102 aa).

This sequence belongs to the LOB domain-containing protein family. As to expression, expressed in young shoots, roots, stems, leaves and flowers.

The chain is LOB domain-containing protein 1 (LBD1) from Arabidopsis thaliana (Mouse-ear cress).